Reading from the N-terminus, the 876-residue chain is AP-5 complex subunit beta-1 (876 aa).

As to quaternary structure, probably part of the adaptor protein complex 5 (AP-5), a tetramer composed of AP5B1, AP5M1, AP5S1 and AP5Z1. Interacts with ZFYVE26 and SPG11.

Its function is as follows. As part of AP-5, a probable fifth adaptor protein complex it may be involved in endosomal transport. This chain is AP-5 complex subunit beta-1 (Ap5b1), found in Mus musculus (Mouse).